Consider the following 1003-residue polypeptide: Anoctamin-2 (1003 aa).

Positions 1–68 (MATPGPRDIP…PCGGESTRSS (68 aa)) are disordered. Residues 1-365 (MATPGPRDIP…FGEKIGLYFA (365 aa)) lie on the Cytoplasmic side of the membrane. The segment covering 10 to 21 (PLLPGSPRRLSP) has biased composition (low complexity). A helical transmembrane segment spans residues 366–386 (WLGLYTSFLIPSSVIGVIVFL). The Extracellular portion of the chain corresponds to 387–434 (YGCATIEEDIPSREMCDQQNAFTMCPLCDKSCDYWNLSSACGTAQASH). Asn-422 carries N-linked (GlcNAc...) asparagine glycosylation. The chain crosses the membrane as a helical span at residues 435 to 455 (LFDNPATVFFSIFMALWATMF). The Cytoplasmic segment spans residues 456 to 538 (LENWKRLQMR…KDRFPGYLMN (83 aa)). A helical membrane pass occupies residues 539–559 (FASILFMIALTFSIVFGVIVY). Topologically, residues 560-582 (RITTAAALSLNKATRSNVRVTVT) are extracellular. The helical transmembrane segment at 583–603 (ATAVIINLVVILILDEIYGAV) threads the bilayer. The Cytoplasmic portion of the chain corresponds to 604–623 (AKWLTKIEVPKTEQTFEERL). The helical transmembrane segment at 624 to 644 (ILKAFLLKFVNAYSPIFYVAF) threads the bilayer. The Extracellular portion of the chain corresponds to 645–748 (FKGRFVGRPG…YTGLTPEYME (104 aa)). A helical membrane pass occupies residues 749–769 (MIIQFGFVTLFVASFPLAPVF). Over 770-801 (ALLNNVIEVRLDAKKFVTELRRPDAVRTKDIG) the chain is Cytoplasmic. A helical transmembrane segment spans residues 802 to 822 (IWFDILSGIGKFSVISNAFVI). At 823–907 (AITSDFIPRL…QYWFILSARL (85 aa)) the chain is on the extracellular side. Residues Asn-841, Asn-849, and Asn-856 are each glycosylated (N-linked (GlcNAc...) asparagine). Residues 908–928 (AFVIIFQNLVMFLSVLVDWMI) traverse the membrane as a helical segment. The Cytoplasmic segment spans residues 929-1003 (PDIPTDISDQ…MSSGSQHTNV (75 aa)). Residues 961–1003 (MDEPALRSPGGGDRSRSRAASSAPSGQSQLGSMMSSGSQHTNV) are disordered. The span at 978–1003 (RAASSAPSGQSQLGSMMSSGSQHTNV) shows a compositional bias: low complexity. The short motif at 1001 to 1003 (TNV) is the DLG4 binding (PDZ) element.

The protein belongs to the anoctamin family. Homodimer. Component of a presynaptic protein complex recruited to specialized plasma membrane domains of photoreceptors. Interacts with DLG4 by its C-terminal region. Retina, especially in the photoreceptor synaptic terminals.

The protein resides in the cell membrane. It carries out the reaction chloride(in) = chloride(out). Channel activity is repressed by chloride inhibitors; strongly by niflumic acid (NFA), partially by flufenamic acid (FFA), and only slightly by meclofenamic acid (MFA), 5-Nitro-2-(3-phenylpropylamino)benzoic acid (NPPB), 4-acetamido-4'-isothiocyanato-stilben-2,2'-disulfonate (SITS), and 4,4'-diisothiocyanatostilbene-2,2'-disulfonic acid (DIDS). Its function is as follows. Calcium-activated chloride channel (CaCC) which may play a role in olfactory signal transduction. Odorant molecules bind to odor-sensing receptors (OSRs), leading to an increase in calcium entry that activates CaCC current which amplifies the depolarization of the OSR cells, ANO2 seems to be the underlying chloride channel involved in this process. May mediate light perception amplification in retina. The sequence is that of Anoctamin-2 (ANO2) from Homo sapiens (Human).